We begin with the raw amino-acid sequence, 261 residues long: Imidazole glycerol phosphate synthase subunit HisF (261 aa).

Residues Asp12 and Asp131 contribute to the active site.

This sequence belongs to the HisA/HisF family. In terms of assembly, heterodimer of HisH and HisF.

It is found in the cytoplasm. The enzyme catalyses 5-[(5-phospho-1-deoxy-D-ribulos-1-ylimino)methylamino]-1-(5-phospho-beta-D-ribosyl)imidazole-4-carboxamide + L-glutamine = D-erythro-1-(imidazol-4-yl)glycerol 3-phosphate + 5-amino-1-(5-phospho-beta-D-ribosyl)imidazole-4-carboxamide + L-glutamate + H(+). Its pathway is amino-acid biosynthesis; L-histidine biosynthesis; L-histidine from 5-phospho-alpha-D-ribose 1-diphosphate: step 5/9. In terms of biological role, IGPS catalyzes the conversion of PRFAR and glutamine to IGP, AICAR and glutamate. The HisF subunit catalyzes the cyclization activity that produces IGP and AICAR from PRFAR using the ammonia provided by the HisH subunit. This chain is Imidazole glycerol phosphate synthase subunit HisF, found in Brucella anthropi (strain ATCC 49188 / DSM 6882 / CCUG 24695 / JCM 21032 / LMG 3331 / NBRC 15819 / NCTC 12168 / Alc 37) (Ochrobactrum anthropi).